The following is a 272-amino-acid chain: GATA zinc finger domain-containing protein 1 (272 aa).

The segment at 9–33 adopts a GATA-type zinc-finger fold; the sequence is CSVCKTTSSSMWKKGPQGEILCHHC. Residues 67 to 120 are disordered; it reads TFASTSAAPPQSNGGGGGKQSKQEIHRRSARLRNTKYKSAPAAEKKVSTKGKGR. Lysine 167 is modified (N6-acetyllysine). Residue lysine 265 forms a Glycyl lysine isopeptide (Lys-Gly) (interchain with G-Cter in SUMO2) linkage.

It localises to the nucleus. This chain is GATA zinc finger domain-containing protein 1 (GATAD1), found in Bos taurus (Bovine).